We begin with the raw amino-acid sequence, 885 residues long: Cadherin-1 (885 aa).

Residues 1-26 (MGPRYGGAPALLLPLLLLLQVSSGLC) form the signal peptide. Residues 27-156 (QEPEPCRPGF…SQHGLRRQKR (130 aa)) constitute a propeptide that is removed on maturation. A compositionally biased stretch (basic residues) spans 121–131 (KAATHHHHHHH). A disordered region spans residues 121–141 (KAATHHHHHHHDAPSKTQTEV). Topologically, residues 157–712 (DWVIPPISCP…YAEAGLQVPA (556 aa)) are extracellular. 5 Cadherin domains span residues 158-264 (WVIP…KPEF), 265-377 (TQAV…PPIF), 378-488 (NPTT…APIF), 489-597 (IPCP…GPIP), and 607-688 (KNPQ…VFVC). D259 lines the Ca(2+) pocket. A glycan (O-linked (Man...) serine) is linked at S282. O-linked (Man...) threonine glycosylation occurs at T287. Residue D290 coordinates Ca(2+). Residues T360, T472, T474, and T511 are each glycosylated (O-linked (Man...) threonine). N560 carries an N-linked (GlcNAc...) asparagine glycan. O-linked (Man...) threonine glycans are attached at residues T578, T580, and T582. N639 carries an N-linked (GlcNAc...) asparagine glycan. Residues 713 to 733 (ILGILGGILALLILILLLLLF) form a helical membrane-spanning segment. At 734–885 (VRRRRVVKEP…ADMYGGGEDD (152 aa)) the chain is on the cytoplasmic side. A disordered region spans residues 750-770 (DTRDNVYYYDEEGGGEEDQDF). A phosphotyrosine; by SRC mark is found at Y756, Y757, and Y758. Over residues 758 to 770 (YDEEGGGEEDQDF) the composition is skewed to acidic residues. The tract at residues 761 to 772 (EGGGEEDQDFDL) is required for binding CTNND1 and PSEN1. Phosphoserine occurs at positions 773, 796, 841, 843, and 849. Positions 792 to 811 (PTLLSVPQYRPRPANPDEIG) are disordered. Positions 814 to 885 (IDENLKAADT…ADMYGGGEDD (72 aa)) are required for binding alpha, beta and gamma catenins.

In terms of assembly, homodimer; disulfide-linked. Component of an E-cadherin/ catenin adhesion complex composed of at least E-cadherin/CDH1, beta-catenin/CTNNB1 or gamma-catenin/JUP, and potentially alpha-catenin/CTNNA1; the complex is located to adherens junctions. Found in a complex composed of CDH1, RAP1A and PKP3; PKP3 acts as a scaffold protein within the complex, the complex is required for CDH1 localization to mature desmosome cell junctions. Interacts with the TRPV4 and CTNNB1 complex. Interacts with CTNND1. The stable association of CTNNA1 is controversial as CTNNA1 was shown not to bind to F-actin when assembled in the complex. Alternatively, the CTNNA1-containing complex may be linked to F-actin by other proteins such as LIMA1. Interaction with PSEN1, cleaves CDH1 resulting in the disassociation of cadherin-based adherens junctions (CAJs). Interacts with AJAP1 and DLGAP5. Interacts with TBC1D2. Interacts with LIMA1. Interacts with CAV1. Interacts with PIP5K1C. Interacts with RAB8B. Interacts with DDR1; this stabilizes CDH1 at the cell surface and inhibits its internalization. Interacts with RAPGEF2. Interacts with KLRG1. Forms a ternary complex composed of ADAM10, CADH1 and EPHA4; within the complex, CADH1 is cleaved by ADAM10 which disrupts adherens junctions. Interacts with SPEF1. Interacts with CTNNB1 and PKP2. Interacts with AMOTL2; the interaction may facilitate binding of radial actin fibers to cell junction complexes. Interacts with DSG3; the interaction is required for CDH1 localization to developing adherens junctions. In terms of processing, during apoptosis or with calcium influx, cleaved by a membrane-bound metalloproteinase (ADAM10), PS1/gamma-secretase and caspase-3. Processing by the metalloproteinase, induced by calcium influx, causes disruption of cell-cell adhesion and the subsequent release of beta-catenin into the cytoplasm. The residual membrane-tethered cleavage product is rapidly degraded via an intracellular proteolytic pathway. Cleavage by caspase-3 releases the cytoplasmic tail resulting in disintegration of the actin microfilament system. The gamma-secretase-mediated cleavage promotes disassembly of adherens junctions. During development of the cochlear organ of Corti, cleavage by ADAM10 at adherens junctions promotes pillar cell separation. Post-translationally, N-glycosylation at Asn-639 is essential for expression, folding and trafficking. Addition of bisecting N-acetylglucosamine by MGAT3 modulates its cell membrane location. Ubiquitinated by a SCF complex containing SKP2, which requires prior phosphorylation by CK1/CSNK1A1. Ubiquitinated by CBLL1/HAKAI, requires prior phosphorylation at Tyr-757. In terms of processing, O-glycosylated. O-manosylated by TMTC1, TMTC2, TMTC3 or TMTC4. Thr-287 and Thr-511 are O-mannosylated by TMTC2 or TMTC4 but not TMTC1 or TMTC3.

It is found in the cell junction. Its subcellular location is the adherens junction. The protein localises to the cell membrane. It localises to the endosome. The protein resides in the golgi apparatus. It is found in the trans-Golgi network. Its subcellular location is the cytoplasm. The protein localises to the desmosome. Functionally, cadherins are calcium-dependent cell adhesion proteins. They preferentially interact with themselves in a homophilic manner in connecting cells; cadherins may thus contribute to the sorting of heterogeneous cell types. CDH1 is involved in mechanisms regulating cell-cell adhesions, mobility and proliferation of epithelial cells. Promotes organization of radial actin fiber structure and cellular response to contractile forces, via its interaction with AMOTL2 which facilitates anchoring of radial actin fibers to CDH1 junction complexes at the cell membrane. Plays a role in the early stages of desmosome cell-cell junction formation via facilitating the recruitment of DSG2 and DSP to desmosome plaques. Has a potent invasive suppressor role. It is a ligand for integrin alpha-E/beta-7. Its function is as follows. E-Cad/CTF2 promotes non-amyloidogenic degradation of Abeta precursors. Has a strong inhibitory effect on APP C99 and C83 production. The sequence is that of Cadherin-1 (CDH1) from Canis lupus familiaris (Dog).